The chain runs to 231 residues: Orotidine 5'-phosphate decarboxylase (231 aa).

Substrate is bound by residues Asp-11, Lys-34, 61-70 (DLKLHDIPNT), Thr-117, Arg-179, Gln-188, Gly-208, and Arg-209. Catalysis depends on Lys-63, which acts as the Proton donor.

It belongs to the OMP decarboxylase family. Type 1 subfamily. Homodimer.

The enzyme catalyses orotidine 5'-phosphate + H(+) = UMP + CO2. It functions in the pathway pyrimidine metabolism; UMP biosynthesis via de novo pathway; UMP from orotate: step 2/2. Its function is as follows. Catalyzes the decarboxylation of orotidine 5'-monophosphate (OMP) to uridine 5'-monophosphate (UMP). This Streptococcus suis (strain 98HAH33) protein is Orotidine 5'-phosphate decarboxylase.